We begin with the raw amino-acid sequence, 59 residues long: uncharacterized protein (59 aa).

Positions 1 to 21 (MYLFYVLLSSLFLSALIYVIG) are cleaved as a signal peptide. Over 22–24 (KSH) the chain is Extracellular. The helical transmembrane segment at 25 to 45 (PNLFMFISLFVNVVTILYLVF) threads the bilayer. At 46-59 (KDYGQYIIAKPINT) the chain is on the cytoplasmic side.

It localises to the host membrane. This is an uncharacterized protein from Acidianus convivator (ABV).